Here is a 262-residue protein sequence, read N- to C-terminus: Probable carboxylesterase Culp3 (262 aa).

A signal peptide spans 1 to 41 (MNNRPIRLLTSGRAGLGAGALITAVVLLIALGAVWTPVAFA). C44 and C114 are joined by a disulfide. The active-site Nucleophile is the S125. Residues C188 and C195 are joined by a disulfide bond. D192 is a catalytic residue. Residue H206 is the Proton donor/acceptor of the active site. Residues 241-262 (LPGSVLQMPGTAAPAPESLHGR) are disordered.

The protein belongs to the cutinase family.

Its subcellular location is the secreted. In terms of biological role, shows weak esterase activity with the p-nitrophenol-linked aliphatic ester pNP-butyrate. Does not exhibit cutinase activity. This chain is Probable carboxylesterase Culp3 (cut3), found in Mycobacterium tuberculosis (strain ATCC 25618 / H37Rv).